The chain runs to 359 residues: 3-dehydroquinate synthase (359 aa).

NAD(+) contacts are provided by residues aspartate 72–lysine 77, glycine 106–aspartate 110, threonine 130–threonine 131, lysine 143, and lysine 152. Zn(2+)-binding residues include glutamate 185, histidine 248, and histidine 265.

The protein belongs to the sugar phosphate cyclases superfamily. Dehydroquinate synthase family. It depends on Co(2+) as a cofactor. The cofactor is Zn(2+). NAD(+) serves as cofactor.

It localises to the cytoplasm. It carries out the reaction 7-phospho-2-dehydro-3-deoxy-D-arabino-heptonate = 3-dehydroquinate + phosphate. Its pathway is metabolic intermediate biosynthesis; chorismate biosynthesis; chorismate from D-erythrose 4-phosphate and phosphoenolpyruvate: step 2/7. Its function is as follows. Catalyzes the conversion of 3-deoxy-D-arabino-heptulosonate 7-phosphate (DAHP) to dehydroquinate (DHQ). The sequence is that of 3-dehydroquinate synthase from Thermodesulfovibrio yellowstonii (strain ATCC 51303 / DSM 11347 / YP87).